The following is a 148-amino-acid chain: MKVILKENVENLGHIGDIVKVAPGYARNYLIPRNFAIEATEKNAKALEHAKRQLEYKRNKVLEQARLLVAKIEGLSLSISHQAGEEGKLFGSVTNMELAELLKAQGVEIDRKKIVLAEPIKHVGEFTAVVKVHPEVAANLKVVVTKAE.

The protein belongs to the bacterial ribosomal protein bL9 family.

In terms of biological role, binds to the 23S rRNA. The chain is Large ribosomal subunit protein bL9 from Geobacter sulfurreducens (strain ATCC 51573 / DSM 12127 / PCA).